The chain runs to 85 residues: MRQNIHPEYHNVIFLDTTTDFKFLSGSTKTSSETMEWEDGNEYPVIRLDISSDSHPFYTGRQKFAAADGRVERFNKKFGFKSSNE.

This sequence belongs to the bacterial ribosomal protein bL31 family. Type B subfamily. As to quaternary structure, part of the 50S ribosomal subunit.

This is Large ribosomal subunit protein bL31B from Staphylococcus saprophyticus subsp. saprophyticus (strain ATCC 15305 / DSM 20229 / NCIMB 8711 / NCTC 7292 / S-41).